A 450-amino-acid chain; its full sequence is Trigger factor (450 aa).

The PPIase FKBP-type domain maps to 163–249; it reads EDFVLIDYQG…LKEIQEQILP (87 aa). Residues 431 to 443 are compositionally biased toward acidic residues; it reads PEVETEVSESAAD. The segment at 431–450 is disordered; it reads PEVETEVSESAADVEDKTDQ.

This sequence belongs to the FKBP-type PPIase family. Tig subfamily.

It is found in the cytoplasm. The catalysed reaction is [protein]-peptidylproline (omega=180) = [protein]-peptidylproline (omega=0). In terms of biological role, involved in protein export. Acts as a chaperone by maintaining the newly synthesized protein in an open conformation. Functions as a peptidyl-prolyl cis-trans isomerase. This is Trigger factor from Desulforapulum autotrophicum (strain ATCC 43914 / DSM 3382 / VKM B-1955 / HRM2) (Desulfobacterium autotrophicum).